We begin with the raw amino-acid sequence, 448 residues long: FAD-dependent monooxygenase srdH (448 aa).

E32 and R107 together coordinate FAD. Q227 is a catalytic residue. D313 contributes to the FAD binding site.

Belongs to the paxM FAD-dependent monooxygenase family. Requires FAD as cofactor.

Functionally, highly reducing polyketide synthase; part of the gene cluster that mediates the biosynthesis of sordarial, a salicylic aldehyde structurally related to the phytotoxin pyriculol. The most interesting aspect of this pathway is formation of an aromatic product from the highly reducing polyketide synthase srdA. SrdA synthesizes a reduced polyketide chain from one molecule of acetyl-CoA and five molecules of malonyl-CoA. The polyketide chain is then reductively released as an aldehyde. The oxidoreductases srdC, srdD and srdE then oxidize one of the hydroxy groups to facilitate the intramolecular aldol condensation, followed by dehydration to yield a salicylic aldehyde. This aldehyde can undergo facile reduction by endogenous reductases to yield the alcohol 1-hydroxy-2-hydroxymethyl-3-pent-1,3-dienylbenzene. The flavin-dependent srdI counteract against the propensity of the aldehydes to be reduced under physiological conditions and is responsible for reoxidizing 1-hydroxy-2-hydroxymethyl-3-pent-1,3-dienylbenzene back to the salicylic aldehyde. This salicylic aldehyde is then selectively epoxidized by the cupin-domain-containing oxidoreductase srdB to yield the epoxide, which can be hydrolyzed stereoselectively by the hydrolase srdG to give the final product sordarial. The chain is FAD-dependent monooxygenase srdH from Neurospora crassa (strain ATCC 24698 / 74-OR23-1A / CBS 708.71 / DSM 1257 / FGSC 987).